We begin with the raw amino-acid sequence, 155 residues long: Ribosomal RNA large subunit methyltransferase H (155 aa).

S-adenosyl-L-methionine contacts are provided by residues Leu-73, Gly-104, and 123–128 (LSALTL).

The protein belongs to the RNA methyltransferase RlmH family. As to quaternary structure, homodimer.

Its subcellular location is the cytoplasm. The catalysed reaction is pseudouridine(1915) in 23S rRNA + S-adenosyl-L-methionine = N(3)-methylpseudouridine(1915) in 23S rRNA + S-adenosyl-L-homocysteine + H(+). Its function is as follows. Specifically methylates the pseudouridine at position 1915 (m3Psi1915) in 23S rRNA. The polypeptide is Ribosomal RNA large subunit methyltransferase H (Saccharophagus degradans (strain 2-40 / ATCC 43961 / DSM 17024)).